The sequence spans 198 residues: Phosphoheptose isomerase (198 aa).

The region spanning 36 to 198 is the SIS domain; it reads MARALGADRK…DRTLFGGPGG (163 aa). Residue 51 to 53 coordinates substrate; the sequence is NGG. Zn(2+) contacts are provided by H60 and E64. Substrate is bound by residues E64, 93-94, 119-121, S124, and Q174; these read ND and STS. Residues Q174 and H182 each coordinate Zn(2+).

The protein belongs to the SIS family. GmhA subfamily. In terms of assembly, homotetramer. Requires Zn(2+) as cofactor.

Its subcellular location is the cytoplasm. The enzyme catalyses 2 D-sedoheptulose 7-phosphate = D-glycero-alpha-D-manno-heptose 7-phosphate + D-glycero-beta-D-manno-heptose 7-phosphate. It functions in the pathway carbohydrate biosynthesis; D-glycero-D-manno-heptose 7-phosphate biosynthesis; D-glycero-alpha-D-manno-heptose 7-phosphate and D-glycero-beta-D-manno-heptose 7-phosphate from sedoheptulose 7-phosphate: step 1/1. Catalyzes the isomerization of sedoheptulose 7-phosphate in D-glycero-D-manno-heptose 7-phosphate. This is Phosphoheptose isomerase from Halorhodospira halophila (strain DSM 244 / SL1) (Ectothiorhodospira halophila (strain DSM 244 / SL1)).